We begin with the raw amino-acid sequence, 253 residues long: Tryptophan synthase alpha chain (253 aa).

Residues E48 and D59 each act as proton acceptor in the active site.

This sequence belongs to the TrpA family. In terms of assembly, tetramer of two alpha and two beta chains.

The catalysed reaction is (1S,2R)-1-C-(indol-3-yl)glycerol 3-phosphate + L-serine = D-glyceraldehyde 3-phosphate + L-tryptophan + H2O. The protein operates within amino-acid biosynthesis; L-tryptophan biosynthesis; L-tryptophan from chorismate: step 5/5. The alpha subunit is responsible for the aldol cleavage of indoleglycerol phosphate to indole and glyceraldehyde 3-phosphate. This Caldicellulosiruptor saccharolyticus (strain ATCC 43494 / DSM 8903 / Tp8T 6331) protein is Tryptophan synthase alpha chain.